The sequence spans 461 residues: pre-mRNA splicing regulator USH1G (461 aa).

ANK repeat units follow at residues 31-60 (DGMT…DPDK), 64-93 (WGNT…NIWC), and 97-126 (DYHT…KQSS). Disordered regions lie at residues 208-243 (GTAR…SARS) and 332-368 (EDGG…DRSC). The span at 210-222 (ARGKTKMQKKLER) shows a compositional bias: basic residues. Positions 385–447 (LEPETSPLET…KILGAVRRRR (63 aa)) constitute an SAM domain. Ser422 carries the post-translational modification Phosphoserine; by CK2.

In terms of assembly, part of a complex composed of USH1C, USH1G and MYO7A. Interacts with USH1C (via the first PDZ domain). Interacts with PDZD7. Interacts with CDH23 and PCDH15; these interactions may recruit USH1G to the plasma membrane. Interacts with intraflagellar transport proteins IFT20, IFT52 and IFT57. Interacts with splicing factors SF3B1, PRPF6, PRPF31 and SON. Interacts with the U4/U6.U5 tri-small nuclear ribonucleoprotein (tri-snRNP) complex in the presence of pre-mRNAs. Interacts (via SAM domain) with MAGI2 (via PDZ 6 domain); the interaction is triggered by phosphorylation of USH1G by CK2 and negatively regulates MAGI2-mediated endocytosis. In terms of tissue distribution, expressed in vestibule of the inner ear, eye and small intestine.

It localises to the cytoplasm. The protein resides in the cytosol. It is found in the cytoskeleton. Its subcellular location is the cell membrane. The protein localises to the cell projection. It localises to the cilium. The protein resides in the nucleus speckle. It is found in the nucleus. Its subcellular location is the cajal body. The protein localises to the microtubule organizing center. It localises to the centrosome. The protein resides in the photoreceptor inner segment. In terms of biological role, plays a role in pre-mRNA splicing by regulating the release and transfer of U4/U6.U5 tri-small nuclear ribonucleoprotein (tri-snRNP) complexes from their assembly site in Cajal bodies to nuclear speckles, thereby contributing to the assembly of the pre-catalytic spliceosome on target pre-mRNAs. May also participate in recycling of snRNPs back to Cajal bodies during splicing. Plays a role in regulating MAGI2-mediated endocytosis. Anchoring/scaffolding protein that is a part of the functional network formed by USH1C, USH1G, CDH23 and MYO7A that mediates mechanotransduction in cochlear hair cells. Required for normal development and maintenance of cochlear hair cell bundles. Required for normal hearing. This is pre-mRNA splicing regulator USH1G (USH1G) from Homo sapiens (Human).